The sequence spans 145 residues: Peptide methionine sulfoxide reductase MsrB (145 aa).

Residues 6–129 (EEELKQTLTD…NAAALRFVPV (124 aa)) form the MsrB domain. C118 serves as the catalytic Nucleophile.

Belongs to the MsrB Met sulfoxide reductase family.

It catalyses the reaction L-methionyl-[protein] + [thioredoxin]-disulfide + H2O = L-methionyl-(R)-S-oxide-[protein] + [thioredoxin]-dithiol. The chain is Peptide methionine sulfoxide reductase MsrB from Enterococcus faecalis (strain ATCC 700802 / V583).